The chain runs to 1050 residues: Inositol hexakisphosphate kinase 1 (1050 aa).

Disordered stretches follow at residues 87–117, 129–177, 269–319, and 396–423; these read KITR…LSSS, PAIK…IQNV, RQEN…DNEH, and SDLD…NNND. Ser150 bears the Phosphoserine mark. A compositionally biased stretch (polar residues) spans 156-173; that stretch reads KQQSHQPQVLHHQTSLKP. Residues 290-306 are compositionally biased toward basic and acidic residues; that stretch reads ESIKEKPNTFEQDKEGE. Acidic residues predominate over residues 307 to 316; the sequence is QADEEEDEGD. Position 396 is a phosphoserine (Ser396). Residues 402–417 are compositionally biased toward basic and acidic residues; the sequence is NNGKNDTSNENKDIEV. A Phosphoserine modification is found at Ser469. Residues 508–522 are compositionally biased toward low complexity; sequence NDSYFSSSSSHNSCS. Disordered stretches follow at residues 508-539 and 562-625; these read NDSY…DSGS and RKRN…PNLQ. Phosphoserine occurs at positions 537, 539, 566, 583, 589, 646, 664, and 670. Residues 566 to 624 show a composition bias toward polar residues; that stretch reads SNTTTMGNHNARLGSSPSFLTQKSRASSHDASNTSMKTLGDSSSQASLQMDDSKVNPNL. 772–780 contributes to the substrate binding site; the sequence is PCALDLKMG.

Belongs to the inositol phosphokinase (IPK) family.

The protein resides in the cytoplasm. It catalyses the reaction 1D-myo-inositol hexakisphosphate + ATP = 5-diphospho-1D-myo-inositol 1,2,3,4,6-pentakisphosphate + ADP. The catalysed reaction is 1-diphospho-1D-myo-inositol 2,3,4,5,6-pentakisphosphate + ATP + H(+) = 1,5-bis(diphospho)-1D-myo-inositol 2,3,4,6-tetrakisphosphate + ADP. Converts inositol hexakisphosphate (InsP6) to diphosphoinositol pentakisphosphate (InsP7/PP-InsP5). Involved in phosphate regulation and polyphosphate accumulation. Required for resistance to salt stress, cell wall integrity, vacuole morphogenesis, and telomere maintenance. In Saccharomyces cerevisiae (strain ATCC 204508 / S288c) (Baker's yeast), this protein is Inositol hexakisphosphate kinase 1 (KCS1).